We begin with the raw amino-acid sequence, 438 residues long: sn-glycerol-3-phosphate-binding periplasmic protein UgpB (438 aa).

Residues 1-23 (MKPLRYTASALALGLALMANAQA) form the signal peptide. Tyr65, Glu89, Ser144, Ser270, Gly307, Tyr346, and Arg397 together coordinate sn-glycerol 3-phosphate.

Belongs to the bacterial solute-binding protein 1 family. As to quaternary structure, the complex is composed of two ATP-binding proteins (UgpC), two transmembrane proteins (UgpA and UgpE) and a solute-binding protein (UgpB).

The protein localises to the periplasm. In terms of biological role, part of the ABC transporter complex UgpBAEC involved in sn-glycerol-3-phosphate (G3P) import. Binds G3P. The polypeptide is sn-glycerol-3-phosphate-binding periplasmic protein UgpB (ugpB) (Escherichia coli O1:K1 / APEC).